The sequence spans 703 residues: Polyribonucleotide nucleotidyltransferase (703 aa).

Residues aspartate 486 and aspartate 492 each coordinate Mg(2+). A KH domain is found at 553-614; it reads PRITTIWIKP…AACDAAIQMI (62 aa). Residues 624-692 enclose the S1 motif domain; sequence GKLYMGTVKK…KQGKIKLSRK (69 aa).

This sequence belongs to the polyribonucleotide nucleotidyltransferase family. Requires Mg(2+) as cofactor.

It is found in the cytoplasm. It carries out the reaction RNA(n+1) + phosphate = RNA(n) + a ribonucleoside 5'-diphosphate. Functionally, involved in mRNA degradation. Catalyzes the phosphorolysis of single-stranded polyribonucleotides processively in the 3'- to 5'-direction. The protein is Polyribonucleotide nucleotidyltransferase of Trichlorobacter lovleyi (strain ATCC BAA-1151 / DSM 17278 / SZ) (Geobacter lovleyi).